A 118-amino-acid polypeptide reads, in one-letter code: Protein yippee-like 1 (118 aa).

The Yippee domain maps to 19-116; the sequence is RTYSCIHCRA…IELAHMIKDN (98 aa). Zn(2+) is bound by residues cysteine 23, cysteine 26, cysteine 79, and cysteine 82. The Nuclear localization signal signature appears at 99–104; that stretch reads KYKEGK.

Belongs to the yippee family.

The protein localises to the nucleus. Its function is as follows. May play a role in epithelioid conversion of fibroblasts. The polypeptide is Protein yippee-like 1 (Ypel1) (Mus musculus (Mouse)).